A 184-amino-acid polypeptide reads, in one-letter code: Large ribosomal subunit protein uL6 (184 aa).

Belongs to the universal ribosomal protein uL6 family. In terms of assembly, part of the 50S ribosomal subunit.

Functionally, this protein binds to the 23S rRNA, and is important in its secondary structure. It is located near the subunit interface in the base of the L7/L12 stalk, and near the tRNA binding site of the peptidyltransferase center. This Thermomicrobium roseum (strain ATCC 27502 / DSM 5159 / P-2) protein is Large ribosomal subunit protein uL6.